Reading from the N-terminus, the 87-residue chain is Toxin ICK-42 (87 aa).

The signal sequence occupies residues 1 to 19; sequence MKPIVYMLLFCAFTVVILG. Intrachain disulfides connect C40–C54, C40–C77, C53–C66, and C80–C87.

It belongs to the neurotoxin 27 (Jztx-72) family. ICK-41 subfamily. In terms of tissue distribution, expressed by the venom gland.

It localises to the secreted. Its function is as follows. Probable neurotoxin with ion channel impairing activity. The chain is Toxin ICK-42 from Trittame loki (Brush-footed trapdoor spider).